The following is a 364-amino-acid chain: S-adenosylmethionine:tRNA ribosyltransferase-isomerase (364 aa).

Belongs to the QueA family. As to quaternary structure, monomer.

Its subcellular location is the cytoplasm. The catalysed reaction is 7-aminomethyl-7-carbaguanosine(34) in tRNA + S-adenosyl-L-methionine = epoxyqueuosine(34) in tRNA + adenine + L-methionine + 2 H(+). It functions in the pathway tRNA modification; tRNA-queuosine biosynthesis. In terms of biological role, transfers and isomerizes the ribose moiety from AdoMet to the 7-aminomethyl group of 7-deazaguanine (preQ1-tRNA) to give epoxyqueuosine (oQ-tRNA). This Bradyrhizobium sp. (strain ORS 278) protein is S-adenosylmethionine:tRNA ribosyltransferase-isomerase.